Consider the following 330-residue polypeptide: Anthranilate phosphoribosyltransferase (330 aa).

Residues glycine 75, 78–79, threonine 83, 85–88, 103–111, and alanine 115 contribute to the 5-phospho-alpha-D-ribose 1-diphosphate site; these read GD, NVST, and KHGNRAASS. Glycine 75 is an anthranilate binding site. Residue serine 87 participates in Mg(2+) binding. Asparagine 106 contributes to the anthranilate binding site. Arginine 161 lines the anthranilate pocket. Mg(2+) contacts are provided by aspartate 220 and glutamate 221.

The protein belongs to the anthranilate phosphoribosyltransferase family. Homodimer. Mg(2+) is required as a cofactor.

The catalysed reaction is N-(5-phospho-beta-D-ribosyl)anthranilate + diphosphate = 5-phospho-alpha-D-ribose 1-diphosphate + anthranilate. Its pathway is amino-acid biosynthesis; L-tryptophan biosynthesis; L-tryptophan from chorismate: step 2/5. In terms of biological role, catalyzes the transfer of the phosphoribosyl group of 5-phosphorylribose-1-pyrophosphate (PRPP) to anthranilate to yield N-(5'-phosphoribosyl)-anthranilate (PRA). In Erythrobacter litoralis (strain HTCC2594), this protein is Anthranilate phosphoribosyltransferase.